We begin with the raw amino-acid sequence, 124 residues long: Fluoride-specific ion channel FluC (124 aa).

Transmembrane regions (helical) follow at residues 4–24, 35–55, 60–80, and 102–122; these read LLLV…ISIF, FGTL…YALG, ISPE…TTFS, and VVLN…LVFS. Na(+)-binding residues include Gly-74 and Thr-77.

Belongs to the fluoride channel Fluc/FEX (TC 1.A.43) family.

The protein localises to the cell inner membrane. The enzyme catalyses fluoride(in) = fluoride(out). With respect to regulation, na(+) is not transported, but it plays an essential structural role and its presence is essential for fluoride channel function. In terms of biological role, fluoride-specific ion channel. Important for reducing fluoride concentration in the cell, thus reducing its toxicity. The polypeptide is Fluoride-specific ion channel FluC (Shewanella oneidensis (strain ATCC 700550 / JCM 31522 / CIP 106686 / LMG 19005 / NCIMB 14063 / MR-1)).